The following is a 988-amino-acid chain: DNA-binding protein SMUBP-2 (988 aa).

Ala2 carries the post-translational modification N-acetylalanine. ATP is bound by residues 213-220 (GPPGTGKT), Gln402, Tyr441, and Glu570. Residues 637-783 (TAFEYLDDIV…KARHITVSRR (147 aa)) form an SS DNA-binding region. 3 disordered regions span residues 651–722 (THEG…GGTD), 765–820 (LKHD…PHGS), and 835–872 (RQQG…ALPS). Positions 702-718 (SQVQPQHSSKANGSDRT) are enriched in polar residues. The region spanning 721 to 784 (TDRTEHFRAM…ARHITVSRRS (64 aa)) is the R3H domain. The span at 765-775 (LKHDSTGEGKA) shows a compositional bias: basic and acidic residues. Phosphoserine occurs at positions 797 and 800. The span at 802-817 (AQAEPEPQVEQPVGQP) shows a compositional bias: low complexity. The segment covering 835 to 844 (RQQGCQAQSQ) has biased composition (polar residues). Positions 857–861 (KKKKK) match the Nuclear localization signal motif. The AN1-type zinc-finger motif lies at 884-933 (VKADNTCSFTKCSASTTTLGQFCMHCSRRYCLSHHLPEIHGCGEKARAHA). Residues Cys890, Cys895, Cys906, Cys909, Cys914, His917, His923, and Cys925 each coordinate Zn(2+). A disordered region spans residues 943–988 (LYAGSGTKDRALDPAKRAQLQRKLDKKLGELSSQRTSKKKEKERGT). Basic and acidic residues predominate over residues 949–971 (TKDRALDPAKRAQLQRKLDKKLG). A coiled-coil region spans residues 957-986 (AKRAQLQRKLDKKLGELSSQRTSKKKEKER).

The protein belongs to the DNA2/NAM7 helicase family. As to quaternary structure, homooligomer. Interacts with RUVBL1. Interacts with RUVBL2. Interacts with GTF3C1. Interacts with ABT1. Interacts with ribosomes. In terms of tissue distribution, expressed in liver, skin, muscle, heart, brain, spleen and kidney.

The protein resides in the nucleus. It localises to the cytoplasm. It is found in the cell projection. The protein localises to the axon. It carries out the reaction ATP + H2O = ADP + phosphate + H(+). Functionally, 5' to 3' helicase that unwinds RNA and DNA duplexes in an ATP-dependent reaction. Specific to 5'-phosphorylated single-stranded guanine-rich sequences. May play a role in RNA metabolism, ribosome biogenesis or initiation of translation. May play a role in regulation of transcription. Interacts with tRNA-Tyr. The polypeptide is DNA-binding protein SMUBP-2 (Ighmbp2) (Rattus norvegicus (Rat)).